A 439-amino-acid polypeptide reads, in one-letter code: Keratin, type I cytoskeletal 40 (439 aa).

The tract at residues 1–89 (MASDGSPSCC…CEEGSFNSNE (89 aa)) is head. Residues 89–400 (EKETMQFLND…GLLEKEDSRL (312 aa)) form the IF rod domain. Residues 90-124 (KETMQFLNDRLASYLERVRSLEENNAELECRIREQ) are coil 1A. Positions 125-135 (CEPNAPLVCPD) are linker 1. Residues 136 to 236 (YQRYFDTIEE…HEEEVNLLRE (101 aa)) are coil 1B. Residues 237–252 (QLGDRLSVELDTAPTV) form a linker 12 region. A coil 2 region spans residues 253–396 (DLNKVLDEMR…NTYRGLLEKE (144 aa)). Positions 397-439 (DSRLPCNPGSGAPMPNSTCEPCSNSMCEPCSAYVICTVENCCA) are tail.

This sequence belongs to the intermediate filament family. In terms of assembly, heterotetramer of two type I and two type II keratins.

Its function is as follows. May play a role in late hair differentiation. This is Keratin, type I cytoskeletal 40 (Krt40) from Mus musculus (Mouse).